The chain runs to 326 residues: Apolipoprotein F (326 aa).

Positions 1–35 (MTGLCGYSAPDMRGLRLIMIPVELLLCYLLLHPVD) are cleaved as a signal peptide. Residues 36–164 (ATSYGKQTNV…EQQSTGRVGR (129 aa)) constitute a propeptide that is removed on maturation. N-linked (GlcNAc...) asparagine glycosylation is present at Asn-118. O-linked (GalNAc...) threonine glycosylation is present at Thr-274. At Ser-323 the chain carries Phosphoserine.

Belongs to the apolipoprotein F family. In terms of processing, O-glycosylated with core 1 or possibly core 8 glycans. In terms of tissue distribution, expressed by the liver and secreted in plasma.

It is found in the secreted. Minor apolipoprotein that associates with LDL. Inhibits cholesteryl ester transfer protein (CETP) activity and appears to be an important regulator of cholesterol transport. Also associates to a lesser degree with VLDL, Apo-AI and Apo-AII. The chain is Apolipoprotein F (APOF) from Homo sapiens (Human).